The following is a 105-amino-acid chain: Phosphoribosyl-ATP pyrophosphatase (105 aa).

Belongs to the PRA-PH family.

The protein localises to the cytoplasm. The enzyme catalyses 1-(5-phospho-beta-D-ribosyl)-ATP + H2O = 1-(5-phospho-beta-D-ribosyl)-5'-AMP + diphosphate + H(+). Its pathway is amino-acid biosynthesis; L-histidine biosynthesis; L-histidine from 5-phospho-alpha-D-ribose 1-diphosphate: step 2/9. This Roseobacter denitrificans (strain ATCC 33942 / OCh 114) (Erythrobacter sp. (strain OCh 114)) protein is Phosphoribosyl-ATP pyrophosphatase.